Consider the following 200-residue polypeptide: Molybdenum cofactor guanylyltransferase (200 aa).

GTP-binding positions include 10-12 (LAG), K23, N51, D69, and D99. D99 is a binding site for Mg(2+).

Belongs to the MobA family. Monomer. It depends on Mg(2+) as a cofactor.

The protein resides in the cytoplasm. The catalysed reaction is Mo-molybdopterin + GTP + H(+) = Mo-molybdopterin guanine dinucleotide + diphosphate. In terms of biological role, transfers a GMP moiety from GTP to Mo-molybdopterin (Mo-MPT) cofactor (Moco or molybdenum cofactor) to form Mo-molybdopterin guanine dinucleotide (Mo-MGD) cofactor. This is Molybdenum cofactor guanylyltransferase from Shewanella pealeana (strain ATCC 700345 / ANG-SQ1).